The following is a 326-amino-acid chain: tRNA-modifying protein YgfZ (326 aa).

2 residues coordinate folate: Trp27 and Trp189.

The protein belongs to the tRNA-modifying YgfZ family.

It localises to the cytoplasm. Folate-binding protein involved in regulating the level of ATP-DnaA and in the modification of some tRNAs. It is probably a key factor in regulatory networks that act via tRNA modification, such as initiation of chromosomal replication. The polypeptide is tRNA-modifying protein YgfZ (Salmonella arizonae (strain ATCC BAA-731 / CDC346-86 / RSK2980)).